The following is a 149-amino-acid chain: Large ribosomal subunit protein bL9 (149 aa).

This sequence belongs to the bacterial ribosomal protein bL9 family.

In terms of biological role, binds to the 23S rRNA. This chain is Large ribosomal subunit protein bL9, found in Haemophilus ducreyi (strain 35000HP / ATCC 700724).